Reading from the N-terminus, the 30-residue chain is 80 kDa carcinoembryonic antigen-binding protein (30 aa).

As to quaternary structure, binds to carcinoembryonic antigen (CEA). Post-translationally, the N-terminus is blocked.

The protein localises to the cell membrane. May play a role in the development of hepatic metastases from colorectal cancers. The sequence is that of 80 kDa carcinoembryonic antigen-binding protein from Rattus norvegicus (Rat).